A 399-amino-acid chain; its full sequence is Putative endoplasmin-like protein (399 aa).

A Glycyl lysine isopeptide (Lys-Gly) (interchain with G-Cter in SUMO2) cross-link involves residue lysine 130. Residues 350-399 are disordered; the sequence is LDLAVVEEPDEEPEETAEDKEQDKDKEMDVGTDEEKQETAKESTAEKDEL. Residues 354–367 are compositionally biased toward acidic residues; it reads VVEEPDEEPEETAE. A compositionally biased stretch (basic and acidic residues) spans 368–399; it reads DKEQDKDKEMDVGTDEEKQETAKESTAEKDEL.

It belongs to the heat shock protein 90 family.

Its function is as follows. Putative molecular chaperone. In Homo sapiens (Human), this protein is Putative endoplasmin-like protein (HSP90B2P).